The chain runs to 562 residues: Tripeptidyl-peptidase 1 (562 aa).

The signal sequence occupies residues 1-19 (MGLQARLLGLLALVIAGKC). Residues 20 to 194 (TYNPEPDQRW…PEPQQVGTVS (175 aa)) constitute a propeptide, removed in mature form. Cysteine 111 and cysteine 122 are oxidised to a cystine. A Peptidase S53 domain is found at 198 to 562 (GVTPSVLRQR…PALLKTLLNP (365 aa)). Asparagine 209 carries an N-linked (GlcNAc...) asparagine glycan. A glycan (N-linked (GlcNAc...) (high mannose) asparagine) is linked at asparagine 221. Residues glutamate 271 and aspartate 275 each act as charge relay system in the active site. N-linked (GlcNAc...) asparagine glycosylation is found at asparagine 285, asparagine 312, and asparagine 442. Cystine bridges form between cysteine 364–cysteine 525 and cysteine 521–cysteine 536. The active-site Charge relay system is the serine 474. Ca(2+)-binding residues include aspartate 516 and valine 517. Glycine 538, glycine 540, and aspartate 542 together coordinate Ca(2+).

Monomer. Interacts with CLN5. Interacts with CLN3. Ca(2+) serves as cofactor. Post-translationally, activated by autocatalytic proteolytical processing upon acidification. N-glycosylation is required for processing and activity.

Its subcellular location is the lysosome. It localises to the melanosome. The enzyme catalyses Release of an N-terminal tripeptide from a polypeptide, but also has endopeptidase activity.. Functionally, lysosomal serine protease with tripeptidyl-peptidase I activity. May act as a non-specific lysosomal peptidase which generates tripeptides from the breakdown products produced by lysosomal proteinases. Requires substrates with an unsubstituted N-terminus. The chain is Tripeptidyl-peptidase 1 (Tpp1) from Mus musculus (Mouse).